Consider the following 321-residue polypeptide: CPX chromosomal region candidate gene 1 protein homolog (321 aa).

Positions 1 to 83 (MSSPTKEGSD…TEIQKDQREE (83 aa)) are disordered. Composition is skewed to polar residues over residues 21-32 (NEPSNDCTTDIE) and 44-60 (VETN…TSQE).

The protein is CPX chromosomal region candidate gene 1 protein homolog (CPXCR1) of Macaca fascicularis (Crab-eating macaque).